The following is a 338-amino-acid chain: Fructose-1,6-bisphosphatase class 1 (338 aa).

Residues Glu-91, Asp-113, Leu-115, and Asp-116 each coordinate Mg(2+). Substrate-binding positions include 116–119 (DGSS), Asn-208, and Lys-274. Glu-280 lines the Mg(2+) pocket.

This sequence belongs to the FBPase class 1 family. As to quaternary structure, homotetramer. Mg(2+) is required as a cofactor.

It is found in the cytoplasm. It carries out the reaction beta-D-fructose 1,6-bisphosphate + H2O = beta-D-fructose 6-phosphate + phosphate. It participates in carbohydrate biosynthesis; gluconeogenesis. The chain is Fructose-1,6-bisphosphatase class 1 from Ralstonia pickettii (strain 12J).